Consider the following 905-residue polypeptide: DNA gyrase subunit A (905 aa).

The Topo IIA-type catalytic domain occupies 35–524 (IPDVRDGLKP…GEFDQDIEDL (490 aa)). Tyr123 functions as the O-(5'-phospho-DNA)-tyrosine intermediate in the catalytic mechanism. The GyrA-box motif lies at 551–557 (QKRGGKG).

The protein belongs to the type II topoisomerase GyrA/ParC subunit family. As to quaternary structure, heterotetramer, composed of two GyrA and two GyrB chains. In the heterotetramer, GyrA contains the active site tyrosine that forms a transient covalent intermediate with DNA, while GyrB binds cofactors and catalyzes ATP hydrolysis.

It localises to the cytoplasm. It carries out the reaction ATP-dependent breakage, passage and rejoining of double-stranded DNA.. Functionally, a type II topoisomerase that negatively supercoils closed circular double-stranded (ds) DNA in an ATP-dependent manner to modulate DNA topology and maintain chromosomes in an underwound state. Negative supercoiling favors strand separation, and DNA replication, transcription, recombination and repair, all of which involve strand separation. Also able to catalyze the interconversion of other topological isomers of dsDNA rings, including catenanes and knotted rings. Type II topoisomerases break and join 2 DNA strands simultaneously in an ATP-dependent manner. This chain is DNA gyrase subunit A, found in Rickettsia prowazekii (strain Madrid E).